A 172-amino-acid polypeptide reads, in one-letter code: MERAEKREFVTELNEVFKASGSVVVAHYAGATVAQMNDFRSKMRAAGGTVKVAKNRLAKIALQGTEAEGITDLFKGQTLIAYSTDPITAPKVVMDFAKTNDKIVVLGGAMGTTTLNADAVKSLATLPSLDELRAKLLGMIQTPATRIAGVVAAPASQLARVFAAYAKKDEAA.

The protein belongs to the universal ribosomal protein uL10 family. As to quaternary structure, part of the ribosomal stalk of the 50S ribosomal subunit. The N-terminus interacts with L11 and the large rRNA to form the base of the stalk. The C-terminus forms an elongated spine to which L12 dimers bind in a sequential fashion forming a multimeric L10(L12)X complex.

Functionally, forms part of the ribosomal stalk, playing a central role in the interaction of the ribosome with GTP-bound translation factors. The protein is Large ribosomal subunit protein uL10 of Rhizobium leguminosarum bv. trifolii (strain WSM2304).